A 77-amino-acid chain; its full sequence is RNA-binding protein Hfq (77 aa).

In terms of domain architecture, Sm spans 10-70 (DAFLNHVRKT…ISTVMPAQPI (61 aa)).

It belongs to the Hfq family. In terms of assembly, homohexamer.

RNA chaperone that binds small regulatory RNA (sRNAs) and mRNAs to facilitate mRNA translational regulation in response to envelope stress, environmental stress and changes in metabolite concentrations. Also binds with high specificity to tRNAs. In Jannaschia sp. (strain CCS1), this protein is RNA-binding protein Hfq.